A 184-amino-acid polypeptide reads, in one-letter code: Cathelicidin-related peptide Pt_CRAMP2 (184 aa).

The N-terminal stretch at 1–22 is a signal peptide; that stretch reads MDGFFWKTWLVVAALAIGGTSS. The propeptide occupies 23 to 150; sequence LPHKPLTYEE…EDEKDQPRRV (128 aa). 2 disulfide bridges follow: Cys81-Cys92 and Cys103-Cys120. The segment covering 125-144 has biased composition (acidic residues); the sequence is EDEEQNQEEEEEEEKEEDEK. The tract at residues 125–147 is disordered; the sequence is EDEEQNQEEEEEEEKEEDEKDQP.

It belongs to the cathelicidin family. In terms of tissue distribution, expressed by the venom gland.

It localises to the secreted. It is found in the target cell membrane. Its function is as follows. Potent antimicrobial peptide against most of Gram-negative bacteria, some Gram-positive bacteria (Bacillus) and some fungi (C.albicans, P.pastoris, A.terreus, A.nidulans, and C.globosum). Adopts an amphipathic alpha helical conformation, that may allow to partition into the target membrane. No hemolytic and cytotoxic activities have been observed on mammalian cells. The chain is Cathelicidin-related peptide Pt_CRAMP2 from Pseudonaja textilis (Eastern brown snake).